A 520-amino-acid polypeptide reads, in one-letter code: Ribonuclease Y 2 (520 aa).

A helical transmembrane segment spans residues 7 to 23; it reads VVLLLASIGVGYGLRAK. Positions 206–269 constitute a KH domain; that stretch reads NHRSFIAENA…AVAMETMEMI (64 aa). One can recognise an HD domain in the interval 332–425; it reads ILEHSIETAK…VEAADAISGA (94 aa).

This sequence belongs to the RNase Y family.

It localises to the cell membrane. Endoribonuclease that initiates mRNA decay. The polypeptide is Ribonuclease Y 2 (Pediococcus pentosaceus (strain ATCC 25745 / CCUG 21536 / LMG 10740 / 183-1w)).